The chain runs to 252 residues: Imidazole glycerol phosphate synthase subunit HisF (252 aa).

Catalysis depends on residues D12 and D131.

This sequence belongs to the HisA/HisF family. Heterodimer of HisH and HisF.

Its subcellular location is the cytoplasm. It catalyses the reaction 5-[(5-phospho-1-deoxy-D-ribulos-1-ylimino)methylamino]-1-(5-phospho-beta-D-ribosyl)imidazole-4-carboxamide + L-glutamine = D-erythro-1-(imidazol-4-yl)glycerol 3-phosphate + 5-amino-1-(5-phospho-beta-D-ribosyl)imidazole-4-carboxamide + L-glutamate + H(+). The protein operates within amino-acid biosynthesis; L-histidine biosynthesis; L-histidine from 5-phospho-alpha-D-ribose 1-diphosphate: step 5/9. In terms of biological role, IGPS catalyzes the conversion of PRFAR and glutamine to IGP, AICAR and glutamate. The HisF subunit catalyzes the cyclization activity that produces IGP and AICAR from PRFAR using the ammonia provided by the HisH subunit. The chain is Imidazole glycerol phosphate synthase subunit HisF from Thermus thermophilus (strain ATCC 27634 / DSM 579 / HB8).